A 503-amino-acid polypeptide reads, in one-letter code: Legumin J (503 aa).

An N-terminal signal peptide occupies residues 1 to 22 (MSKPFLSLLSLSLLLFASACLA). 2 disulfides stabilise this stretch: cysteine 33–cysteine 66 and cysteine 109–cysteine 329. In terms of domain architecture, Cupin type-1 1 spans 38-257 (INALEPDHRV…TFNTEEDTAK (220 aa)). 3 disordered regions span residues 111–140 (ETYE…RRFR), 185–235 (FYLG…EGNS), and 253–323 (EDTA…RKNG). Over residues 118-129 (SSQSRQESRQQQ) the composition is skewed to low complexity. Basic and acidic residues-rich tracts occupy residues 254 to 268 (DTAK…ERSQ) and 282 to 300 (KGKE…HREE). A compositionally biased stretch (acidic residues) spans 301 to 312 (KEEEEEEEEDEE). Residues 313-323 (EKQRSEERKNG) are compositionally biased toward basic and acidic residues. The region spanning 335-482 (ENIADAARAD…AFGLRQRQVT (148 aa)) is the Cupin type-1 2 domain.

The protein belongs to the 11S seed storage protein (globulins) family. Hexamer; each subunit is composed of an acidic and a basic chain derived from a single precursor and linked by a disulfide bond.

Its function is as follows. This protein found in the seeds of many leguminous and non-leguminous plants is the source of sulfur-containing amino acids in seed meals. The sequence is that of Legumin J (LEGJ) from Pisum sativum (Garden pea).